The following is a 377-amino-acid chain: Erythronate-4-phosphate dehydrogenase (377 aa).

The substrate site is built by Ser45 and Thr67. NAD(+) contacts are provided by residues 127–128 (QV), Asp147, and Thr176. Arg209 is an active-site residue. Asp233 is an NAD(+) binding site. Residue Glu238 is part of the active site. His255 functions as the Proton donor in the catalytic mechanism. Gly258 contacts NAD(+). Substrate is bound at residue Tyr259.

Belongs to the D-isomer specific 2-hydroxyacid dehydrogenase family. PdxB subfamily. As to quaternary structure, homodimer.

It is found in the cytoplasm. It carries out the reaction 4-phospho-D-erythronate + NAD(+) = (R)-3-hydroxy-2-oxo-4-phosphooxybutanoate + NADH + H(+). It participates in cofactor biosynthesis; pyridoxine 5'-phosphate biosynthesis; pyridoxine 5'-phosphate from D-erythrose 4-phosphate: step 2/5. Its function is as follows. Catalyzes the oxidation of erythronate-4-phosphate to 3-hydroxy-2-oxo-4-phosphonooxybutanoate. The sequence is that of Erythronate-4-phosphate dehydrogenase from Vibrio atlanticus (strain LGP32) (Vibrio splendidus (strain Mel32)).